Here is a 141-residue protein sequence, read N- to C-terminus: Putative antiporter subunit mnhB2 (141 aa).

4 consecutive transmembrane segments (helical) span residues 10 to 30 (SVTKIVVFILLTFGFYVFFAG), 35 to 55 (GGGFIGGLIFSSAFILMFLAF), 70 to 90 (KLMIIGSLISVATASVPMFFG), and 116 to 136 (LFELGILLTVVGVIVTVMLSI).

The protein belongs to the CPA3 antiporters (TC 2.A.63) subunit B family. In terms of assembly, may form a heterooligomeric complex that consists of seven subunits: mnhA2, mnhB2, mnhC2, mnhD2, mnhE2, mnhF2 and mnhG2.

It is found in the cell membrane. The sequence is that of Putative antiporter subunit mnhB2 (mnhB2) from Staphylococcus epidermidis (strain ATCC 35984 / DSM 28319 / BCRC 17069 / CCUG 31568 / BM 3577 / RP62A).